A 495-amino-acid chain; its full sequence is Major facilitator-type transporter hxnP (495 aa).

A disordered region spans residues 1–24 (MGATATDIEKVPSAGTPDEPKAGE). A run of 5 helical transmembrane segments spans residues 36-55 (SFVRKVDFFVLPMLCLMYFF), 84-104 (LLILLFYIPFGLFDLPWNLLI), 123-143 (VWGICALCQCAANNFGGLLAI), 145-165 (IILGVFEAGFFAGSTFYFTLF), and 177-197 (VLQSFAVLASAFSGLISFGLF). A glycan (N-linked (GlcNAc...) asparagine) is linked at asparagine 200. 5 consecutive transmembrane segments (helical) span residues 209-229 (WLFIVEGAMTLIIGVIGFWWL), 282-302 (VITFSYPVAYATAMNFFPIIV), 314-334 (LWTVAPNLVGAVVLLVVAKSS), 341-361 (SLHIIFSLTVSLVGMLILASI), and 368-388 (GVSYFACFLLASGAYIPTCLV). Asparagine 395 carries an N-linked (GlcNAc...) asparagine glycan. The next 2 membrane-spanning stretches (helical) occupy residues 404–424 (ANTGFFVGLGNIAGVLSAATF) and 436–456 (LVATCACNGVCILATAFMGTW).

Belongs to the major facilitator superfamily.

The protein resides in the cell membrane. In terms of biological role, major facilitator-type transporter, part of the hnx cluster involved in the purine degradation. The nicotinate hydroxylase hnxS accepts nicotinate as a substrate and catalyzes the first step of nicotinate catabolism. The major facilitator-type transporters hxnP and hxnZ are probably involved in the uptake of nicotinate-derived metabolites, and the oxidoreductases hxnT and hxnY in the further metabolism of 6-OH nicotinic acid. The polypeptide is Major facilitator-type transporter hxnP (Emericella nidulans (strain FGSC A4 / ATCC 38163 / CBS 112.46 / NRRL 194 / M139) (Aspergillus nidulans)).